Here is a 146-residue protein sequence, read N- to C-terminus: Phage-like element PBSX protein XkdJ (146 aa).

To B.subtilis YqbJ.

The chain is Phage-like element PBSX protein XkdJ (xkdJ) from Bacillus subtilis (strain 168).